The chain runs to 423 residues: Gamma-glutamyl phosphate reductase (423 aa).

The protein belongs to the gamma-glutamyl phosphate reductase family.

It localises to the cytoplasm. The catalysed reaction is L-glutamate 5-semialdehyde + phosphate + NADP(+) = L-glutamyl 5-phosphate + NADPH + H(+). It participates in amino-acid biosynthesis; L-proline biosynthesis; L-glutamate 5-semialdehyde from L-glutamate: step 2/2. Its function is as follows. Catalyzes the NADPH-dependent reduction of L-glutamate 5-phosphate into L-glutamate 5-semialdehyde and phosphate. The product spontaneously undergoes cyclization to form 1-pyrroline-5-carboxylate. In Burkholderia ambifaria (strain ATCC BAA-244 / DSM 16087 / CCUG 44356 / LMG 19182 / AMMD) (Burkholderia cepacia (strain AMMD)), this protein is Gamma-glutamyl phosphate reductase.